Here is a 115-residue protein sequence, read N- to C-terminus: Large ribosomal subunit protein bL19 (115 aa).

It belongs to the bacterial ribosomal protein bL19 family.

In terms of biological role, this protein is located at the 30S-50S ribosomal subunit interface and may play a role in the structure and function of the aminoacyl-tRNA binding site. The sequence is that of Large ribosomal subunit protein bL19 from Aeromonas hydrophila subsp. hydrophila (strain ATCC 7966 / DSM 30187 / BCRC 13018 / CCUG 14551 / JCM 1027 / KCTC 2358 / NCIMB 9240 / NCTC 8049).